Consider the following 325-residue polypeptide: Eukaryotic translation initiation factor 3 subunit I (325 aa).

WD repeat units follow at residues glycine 8–threonine 47, glycine 50–lysine 91, cysteine 144–asparagine 183, and glutamate 186–threonine 225. At threonine 219 the chain carries Phosphothreonine. Residue lysine 264 is modified to N6-acetyllysine. Lysine 282 participates in a covalent cross-link: Glycyl lysine isopeptide (Lys-Gly) (interchain with G-Cter in ubiquitin). One copy of the WD 5 repeat lies at glycine 283–glutamate 324. Residue tyrosine 308 is modified to Phosphotyrosine.

The protein belongs to the eIF-3 subunit I family. Component of the eukaryotic translation initiation factor 3 (eIF-3) complex, which is composed of 13 subunits: EIF3A, EIF3B, EIF3C, EIF3D, EIF3E, EIF3F, EIF3G, EIF3H, EIF3I, EIF3J, EIF3K, EIF3L and EIF3M. The eIF-3 complex appears to include 3 stable modules: module A is composed of EIF3A, EIF3B, EIF3G and EIF3I; module B is composed of EIF3F, EIF3H, and EIF3M; and module C is composed of EIF3C, EIF3D, EIF3E, EIF3K and EIF3L. EIF3C of module C binds EIF3B of module A and EIF3H of module B, thereby linking the three modules. EIF3J is a labile subunit that binds to the eIF-3 complex via EIF3B. The eIF-3 complex interacts with RPS6KB1 under conditions of nutrient depletion. Mitogenic stimulation leads to binding and activation of a complex composed of MTOR and RPTOR, leading to phosphorylation and release of RPS6KB1 and binding of EIF4B to eIF-3. Post-translationally, phosphorylated by TGF-beta type II receptor.

It is found in the cytoplasm. Component of the eukaryotic translation initiation factor 3 (eIF-3) complex, which is required for several steps in the initiation of protein synthesis. The eIF-3 complex associates with the 40S ribosome and facilitates the recruitment of eIF-1, eIF-1A, eIF-2:GTP:methionyl-tRNAi and eIF-5 to form the 43S pre-initiation complex (43S PIC). The eIF-3 complex stimulates mRNA recruitment to the 43S PIC and scanning of the mRNA for AUG recognition. The eIF-3 complex is also required for disassembly and recycling of post-termination ribosomal complexes and subsequently prevents premature joining of the 40S and 60S ribosomal subunits prior to initiation. The eIF-3 complex specifically targets and initiates translation of a subset of mRNAs involved in cell proliferation, including cell cycling, differentiation and apoptosis, and uses different modes of RNA stem-loop binding to exert either translational activation or repression. This chain is Eukaryotic translation initiation factor 3 subunit I, found in Bos taurus (Bovine).